The sequence spans 287 residues: MAGKTVTNGAAQGKAARSGADGAVRGKAGMGRVDLIGAGPGDPELLTLRALRLLQQADVVVHDRLVSDEVMACIPAHVRRIPVGKAAGFHPVPQEQINALLVELGLSGLTVARLKGGDPTIFGRGGEEFEAVTRAGIPCDYVPGITAAQGAAVSARFPLTHRGLATGLRHVTGHRARDAALDLDWASLADPQTTLAIYMGAANMAEIARELIRHGMPADLPVLAVSQASTPQEQRLHATLQDIAAALARKPLPAPVLFIVGHVAAMAEDCALPQELYRPEWRLVAHG.

Residues 1-10 (MAGKTVTNGA) are compositionally biased toward polar residues. Positions 1–24 (MAGKTVTNGAAQGKAARSGADGAV) are disordered. S-adenosyl-L-methionine contacts are provided by residues P40, 116 to 118 (GGD), T146, and M199.

This sequence belongs to the precorrin methyltransferase family.

The enzyme catalyses uroporphyrinogen III + 2 S-adenosyl-L-methionine = precorrin-2 + 2 S-adenosyl-L-homocysteine + H(+). It participates in porphyrin-containing compound metabolism; siroheme biosynthesis; precorrin-2 from uroporphyrinogen III: step 1/1. In terms of biological role, catalyzes the methylation of both C-2 and C-7 of uroporphyrinogen III leading to precorrin-1 and precorrin-2; their oxidative esterification gives respectively factor I octamethyl ester and sirohydrochlorin. Inactivation of uroporphyrinogen-III methyltransferase results in the loss of nitrite and nitric oxide reductase activities, but not of nitrous oxide reductase activity. Likely involved in heme D1 biosynthesis. This is Uroporphyrinogen-III C-methyltransferase (nirE) from Paracoccus denitrificans (strain Pd 1222).